A 558-amino-acid chain; its full sequence is Phosphatidylserine lipase ABHD16A (558 aa).

Transmembrane regions (helical) follow at residues 60-80 (ILAL…FAFF) and 93-113 (VVPF…VACL). Residues 114 to 558 (RGIGRWTNPQ…AQHFQMPWHL (445 aa)) lie on the Cytoplasmic side of the membrane. The AB hydrolase-1 domain occupies 281-406 (LVICCEGNAG…ALVTRTVRQH (126 aa)). Catalysis depends on charge relay system residues serine 355, aspartate 430, and histidine 507.

Belongs to the AB hydrolase superfamily. ABHD16 family.

It localises to the membrane. It catalyses the reaction 1-heptadecanoyl-2-(5Z,8Z,11Z,14Z-eicosatetraenoyl)-sn-glycero-3-phosphoserine + H2O = 1-heptadecanoyl-sn-glycero-3-phosphoserine + (5Z,8Z,11Z,14Z)-eicosatetraenoate + H(+). It carries out the reaction 1-hexadecanoyl-2-(9Z-octadecenoyl)-sn-glycero-3-phospho-L-serine + H2O = 1-hexadecanoyl-sn-glycero-3-phospho-L-serine + (9Z)-octadecenoate + H(+). The catalysed reaction is 1-octadecanoyl-2-(9Z,12Z-octadecadienoyl)-sn-glycero-3-phosphoserine + H2O = 1-octadecanoyl-sn-glycero-3-phosphoserine + (9Z,12Z)-octadecadienoate + H(+). The enzyme catalyses 1-heptadecanoyl-2-(5Z,8Z,11Z,14Z-eicosatetraenoyl)-sn-glycero-3-phosphocholine + H2O = 1-heptadecanoyl-sn-glycero-3-phosphocholine + (5Z,8Z,11Z,14Z)-eicosatetraenoate + H(+). It catalyses the reaction 1-hexadecanoyl-2-(9Z-octadecenoyl)-sn-glycero-3-phosphoglycerol + H2O = 1-hexadecanoyl-sn-glycero-3-phosphoglycerol + (9Z)-octadecenoate + H(+). It carries out the reaction 1-hexadecanoyl-2-(9Z-octadecenoyl)-sn-glycero-3-phospho-(1D-myo-inositol) + H2O = 1-hexadecanoyl-sn-glycero-3-phospho-(1D-myo-inositol) + (9Z)-octadecenoate + H(+). The catalysed reaction is 1-heptadecanoyl-2-(5Z,8Z,11Z,14Z-eicosatetraenoyl)-sn-glycero-3-phosphoethanolamine + H2O = 1-heptadecanoyl-sn-glycero-3-phosphoethanolamine + (5Z,8Z,11Z,14Z)-eicosatetraenoate + H(+). The enzyme catalyses 1-hexadecanoyl-2-(9Z-octadecenoyl)-sn-glycero-3-phospho-(1'-sn-glycerol) + H2O = 1-hexadecanoyl-sn-glycero-3-phospho-(1'-sn-glycerol) + (9Z)-octadecenoate + H(+). It catalyses the reaction Hydrolyzes glycerol monoesters of long-chain fatty acids.. It carries out the reaction 1-tetradecanoylglycerol + H2O = tetradecanoate + glycerol + H(+). The catalysed reaction is 2-hexadecanoylglycerol + H2O = glycerol + hexadecanoate + H(+). The enzyme catalyses 1-(9Z-octadecenoyl)-glycerol + H2O = glycerol + (9Z)-octadecenoate + H(+). It catalyses the reaction 2-(9Z-octadecenoyl)-glycerol + H2O = glycerol + (9Z)-octadecenoate + H(+). It carries out the reaction 2-(9Z,12Z-octadecadienoyl)-glycerol + H2O = (9Z,12Z)-octadecadienoate + glycerol + H(+). The catalysed reaction is 1-(5Z,8Z,11Z,14Z-eicosatetraenoyl)-glycerol + H2O = glycerol + (5Z,8Z,11Z,14Z)-eicosatetraenoate + H(+). The enzyme catalyses 2-(5Z,8Z,11Z,14Z-eicosatetraenoyl)-glycerol + H2O = glycerol + (5Z,8Z,11Z,14Z)-eicosatetraenoate + H(+). It catalyses the reaction prostaglandin D2-1-glycerol ester + H2O = prostaglandin D2 + glycerol + H(+). It carries out the reaction 2-glyceryl-15-deoxy-Delta(12,14)-prostaglandin J2 + H2O = 15-deoxy-Delta(12,14)-prostaglandin J2 + glycerol + H(+). The catalysed reaction is 1-(9Z,12Z-octadecadienoyl)-glycerol + H2O = (9Z,12Z)-octadecadienoate + glycerol + H(+). Specifically inhibited by alpha-alkylidene-beta-lactone KC01 ((Z)-6-(2-Oxo-4-tridecyloxetan-3-ylidene)hexanamide). Its function is as follows. Phosphatidylserine (PS) lipase that mediates the hydrolysis of phosphatidylserine to generate lysophosphatidylserine (LPS). LPS constitutes a class of signaling lipids that regulates immunological and neurological processes. Has no activity towards diacylglycerol, triacylglycerol or lysophosphatidylserine lipase. Also has monoacylglycerol lipase activity, with preference for 1-(9Z,12Z-octadecadienoyl)-glycerol (1-LG) and 2-glyceryl-15-deoxy-Delta(12,14)-prostaglandin J2 (15d-PGJ(2)-G). This is Phosphatidylserine lipase ABHD16A from Mus musculus (Mouse).